The sequence spans 105 residues: Large ribosomal subunit protein uL24 (105 aa).

The protein belongs to the universal ribosomal protein uL24 family. As to quaternary structure, part of the 50S ribosomal subunit.

In terms of biological role, one of two assembly initiator proteins, it binds directly to the 5'-end of the 23S rRNA, where it nucleates assembly of the 50S subunit. One of the proteins that surrounds the polypeptide exit tunnel on the outside of the subunit. This is Large ribosomal subunit protein uL24 from Marinomonas sp. (strain MWYL1).